A 547-amino-acid polypeptide reads, in one-letter code: Serine/threonine-protein kinase pkn3 (547 aa).

The Protein kinase domain occupies Tyr-18–Val-288. ATP-binding positions include Ile-24–Val-32 and Lys-47. Asp-142 functions as the Proton acceptor in the catalytic mechanism. The span at Lys-290 to Pro-299 shows a compositional bias: basic and acidic residues. Residues Lys-290–Ala-327 are disordered.

Belongs to the protein kinase superfamily. Ser/Thr protein kinase family.

The enzyme catalyses L-seryl-[protein] + ATP = O-phospho-L-seryl-[protein] + ADP + H(+). It catalyses the reaction L-threonyl-[protein] + ATP = O-phospho-L-threonyl-[protein] + ADP + H(+). In Myxococcus xanthus, this protein is Serine/threonine-protein kinase pkn3 (pkn3).